The chain runs to 120 residues: Large ribosomal subunit protein uL18 (120 aa).

It belongs to the universal ribosomal protein uL18 family. As to quaternary structure, part of the 50S ribosomal subunit; part of the 5S rRNA/L5/L18/L25 subcomplex. Contacts the 5S and 23S rRNAs.

In terms of biological role, this is one of the proteins that bind and probably mediate the attachment of the 5S RNA into the large ribosomal subunit, where it forms part of the central protuberance. The sequence is that of Large ribosomal subunit protein uL18 from Beijerinckia indica subsp. indica (strain ATCC 9039 / DSM 1715 / NCIMB 8712).